The chain runs to 872 residues: Serine/threonine-protein phosphatase 1 regulatory subunit 10 (872 aa).

Residues 1 to 348 (MGSGPIDPKE…EPAAPAEPMD (348 aa)) form an interaction with TOX4 region. The region spanning 73-147 (KLLNSWLTYS…SDWMAVIRSQ (75 aa)) is the TFIIS N-terminal domain. Disordered stretches follow at residues 147–213 (QSST…STGL), 247–270 (SATA…NTTP), 307–398 (KKKK…KRKT), and 534–837 (VETL…HGGD). Basic and acidic residues-rich tracts occupy residues 153 to 166 (AEKD…EGKS) and 174 to 196 (PLTE…EKPK). Lysine 179 participates in a covalent cross-link: Glycyl lysine isopeptide (Lys-Gly) (interchain with G-Cter in SUMO2). Residues 248-258 (ATAAPGDAAPP) are compositionally biased toward low complexity. Lysine 262 is covalently cross-linked (Glycyl lysine isopeptide (Lys-Gly) (interchain with G-Cter in SUMO2)). The residue at position 313 (serine 313) is a Phosphoserine. A compositionally biased stretch (low complexity) spans 325-336 (KTSTEPSTAKPS). The segment at 357-433 (PAVEVPELMD…NKIKDFGEAA (77 aa)) is necessary for interaction with PPP1CA. Serine 382 is subject to Phosphoserine. Positions 393-408 (GRKRKTVTWPEEGKLR) are necessary for interaction with PPP1CC. The PP1-binding motif signature appears at 394 to 423 (RKRKTVTWPEEGKLREYFYFELDETERVNV). Threonine 398 carries the phosphothreonine; by PKA modification. The tract at residues 418–619 (TERVNVNKIK…LKQMLVPHGL (202 aa)) is interaction with WDR82. The span at 540-551 (GGSGGSPDGAGG) shows a compositional bias: gly residues. Phosphoserine is present on residues serine 545 and serine 591. Residues 583–595 (EILTSIMGSPNNH) are compositionally biased toward polar residues. Residues 596–611 (PSEELLKQPDYSDKLK) show a composition bias toward basic and acidic residues. Residues 644–655 (PPGPGGPMPGPH) are compositionally biased toward pro residues. Arginine 665 carries the omega-N-methylarginine modification. Positions 674-690 (RGGDPFWDGPGDPMRGG) are enriched in low complexity. Omega-N-methylarginine is present on residues arginine 693 and arginine 737. Gly residues predominate over residues 724–762 (ARGGRSGGGPPNGRGGPGGGGMVGGGGHRPHEGPGGSMG). Positions 795 to 835 (PHDVPSHRGHDHRGPPPHEHRGHDGHGGGGHRGHDGGHSHG) are enriched in basic and acidic residues. A C3H1-type zinc finger spans residues 838 to 866 (MSNRPVCRHFMMKGNCRYENNCAFYHPGV).

Component of the PNUTS-PP1 complex (also named PTW/PP1 complex), composed of PPP1R10/PNUTS, TOX4, WDR82, and PPP1CA (or PPP1CB or PPP1CC). Post-translationally, phosphorylated on Thr-398 by PKA within the region necessary for interaction with PPP1CA. As to expression, expressed in testis, brain and intestine (at protein level). Highly expressed in testis.

Its subcellular location is the nucleus. The protein resides in the chromosome. Substrate-recognition component of the PNUTS-PP1 protein phosphatase complex, a protein phosphatase 1 (PP1) complex that promotes RNA polymerase II transcription pause-release, allowing transcription elongation. Promoter-proximal pausing by RNA polymerase II is a transcription halt following transcription initiation but prior to elongation, which acts as a checkpoint to control that transcripts are favorably configured for transcriptional elongation. The PNUTS-PP1 complex mediates the release of RNA polymerase II from promoter-proximal region of genes by catalyzing dephosphorylation of proteins involved in transcription, such as AFF4, CDK9, MEPCE, INTS12, NCBP1, POLR2M/GDOWN1 and SUPT6H. The PNUTS-PP1 complex also regulates RNA polymerase II transcription termination by mediating dephosphorylation of SUPT5H in termination zones downstream of poly(A) sites, thereby promoting deceleration of RNA polymerase II transcription. PNUTS-PP1 complex is also involved in the response to replication stress by mediating dephosphorylation of POLR2A at 'Ser-5' of the CTD, promoting RNA polymerase II degradation. The PNUTS-PP1 complex also plays a role in the control of chromatin structure and cell cycle progression during the transition from mitosis into interphase. PNUTS-PP1 complex mediates dephosphorylation of MYC, promoting MYC stability by preventing MYC ubiquitination by the SCF(FBXW7) complex. In addition to acts as a substrate-recognition component, PPP1R10/PNUTS also acts as a nuclear targeting subunit for the PNUTS-PP1 complex. In some context, PPP1R10/PNUTS also acts as an inhibitor of protein phosphatase 1 (PP1) activity by preventing access to substrates. In Rattus norvegicus (Rat), this protein is Serine/threonine-protein phosphatase 1 regulatory subunit 10.